The sequence spans 187 residues: Ribosome-recycling factor (187 aa).

This sequence belongs to the RRF family.

It is found in the cytoplasm. Functionally, responsible for the release of ribosomes from messenger RNA at the termination of protein biosynthesis. May increase the efficiency of translation by recycling ribosomes from one round of translation to another. This chain is Ribosome-recycling factor, found in Flavobacterium psychrophilum (strain ATCC 49511 / DSM 21280 / CIP 103535 / JIP02/86).